A 521-amino-acid chain; its full sequence is Bacillolysin (521 aa).

The signal sequence occupies residues 1 to 27; it reads MGLGKKLSVAVAASFMSLSISLPGVQA. The propeptide at 28 to 221 is activation peptide; sequence AEGHQLKENQ…ILKQQNKVEH (194 aa). Asp-360 lines the Ca(2+) pocket. His-364 contributes to the Zn(2+) binding site. Glu-365 is an active-site residue. Residues His-368 and Glu-388 each coordinate Zn(2+). Asp-399, Asp-402, Asp-404, and Glu-407 together coordinate Ca(2+). His-449 acts as the Proton donor in catalysis.

This sequence belongs to the peptidase M4 family. Ca(2+) serves as cofactor. Requires Zn(2+) as cofactor.

It is found in the secreted. The enzyme catalyses Similar, but not identical, to that of thermolysin.. Extracellular zinc metalloprotease. In Bacillus subtilis subsp. amylosacchariticus, this protein is Bacillolysin (nprE).